Here is a 215-residue protein sequence, read N- to C-terminus: FGFR1 oncogene partner 2 homolog (215 aa).

Coiled coils occupy residues 5–104 and 161–185; these read IEKA…MSKY and KEQE…ITRE. The tract at residues 194 to 215 is disordered; the sequence is DASESTSLSALVTNSDLSLRKN. Over residues 197-215 the composition is skewed to polar residues; it reads ESTSLSALVTNSDLSLRKN.

The protein belongs to the SIKE family.

The protein resides in the cytoplasm. Its function is as follows. May be involved in wound healing pathway. In Pongo abelii (Sumatran orangutan), this protein is FGFR1 oncogene partner 2 homolog (FGFR1OP2).